The sequence spans 321 residues: Torsin-2A (321 aa).

A signal peptide spans methionine 1–alanine 27. Residue glycine 93 to serine 100 coordinates ATP. The N-linked (GlcNAc...) asparagine glycan is linked to asparagine 149.

Belongs to the ClpA/ClpB family. Torsin subfamily. In terms of assembly, homohexamer. Interacts with TOR1AIP1.

The protein resides in the endoplasmic reticulum lumen. The protein is Torsin-2A (Tor2a) of Rattus norvegicus (Rat).